The primary structure comprises 414 residues: Putative competence-damage inducible protein (414 aa).

It belongs to the CinA family.

The polypeptide is Putative competence-damage inducible protein (Moorella thermoacetica (strain ATCC 39073 / JCM 9320)).